The primary structure comprises 500 residues: Endonuclease domain-containing 1 protein (500 aa).

The signal sequence occupies residues Met1 to Gly21. The disordered stretch occupies residues Glu293 to Gly323. The segment covering Gln297 to Pro317 has biased composition (low complexity). At Lys407 the chain carries N6-acetyllysine.

It belongs to the DNA/RNA non-specific endonuclease family. In terms of assembly, interacts with RNF26; this interaction is important to modulate innate immune signaling through the cGAS-STING pathway.

It is found in the secreted. In terms of biological role, may act as a DNase and a RNase. Plays a role in the modulation of innate immune signaling through the cGAS-STING pathway by interacting with RNF26. This is Endonuclease domain-containing 1 protein (ENDOD1) from Homo sapiens (Human).